A 784-amino-acid chain; its full sequence is Kinesin-like protein 6 (784 aa).

The Kinesin motor domain maps to 6-389 (SISVAVRVRP…LKYGNRAKNI (384 aa)). 134 to 141 (GATGCGKT) contributes to the ATP binding site. Coiled coils occupy residues 405–440 (SEYV…EVRK) and 463–483 (RDLQ…EDEI). A disordered region spans residues 677-715 (SEVPTTSSVPPVEIKNKDSKPKVEKSLDKHNMNNDRSFL). The segment covering 690–709 (IKNKDSKPKVEKSLDKHNMN) has biased composition (basic and acidic residues).

This sequence belongs to the TRAFAC class myosin-kinesin ATPase superfamily. Kinesin family. Kinesin II subfamily. In terms of assembly, heterodimer with klp5.

Its subcellular location is the cytoplasm. It localises to the cytoskeleton. The protein resides in the chromosome. The protein localises to the centromere. It is found in the kinetochore. Its subcellular location is the spindle. Has a role in establishing metaphase during mitosis. Required for chromosome segregation where it generates tension during kinetochore capturing. This chain is Kinesin-like protein 6 (klp6), found in Schizosaccharomyces pombe (strain 972 / ATCC 24843) (Fission yeast).